Consider the following 157-residue polypeptide: Serine-protein kinase RsbW (157 aa).

It belongs to the anti-sigma-factor family.

The enzyme catalyses L-seryl-[protein] + ATP = O-phospho-L-seryl-[protein] + ADP + H(+). It carries out the reaction L-threonyl-[protein] + ATP = O-phospho-L-threonyl-[protein] + ADP + H(+). Its function is as follows. Negative regulator of sigma-B activity. Phosphorylates and inactivates its specific antagonist protein, RsbV. Upon phosphorylation of RsbV, RsbW is released and binds to sigma-B, thereby blocking its ability to form an RNA polymerase holoenzyme (E-sigma-B). The sequence is that of Serine-protein kinase RsbW from Listeria monocytogenes serotype 4b (strain CLIP80459).